The chain runs to 179 residues: Large ribosomal subunit protein uL5 (179 aa).

The protein belongs to the universal ribosomal protein uL5 family. Part of the 50S ribosomal subunit; part of the 5S rRNA/L5/L18/L25 subcomplex. Contacts the 5S rRNA and the P site tRNA. Forms a bridge to the 30S subunit in the 70S ribosome.

Functionally, this is one of the proteins that bind and probably mediate the attachment of the 5S RNA into the large ribosomal subunit, where it forms part of the central protuberance. In the 70S ribosome it contacts protein S13 of the 30S subunit (bridge B1b), connecting the 2 subunits; this bridge is implicated in subunit movement. Contacts the P site tRNA; the 5S rRNA and some of its associated proteins might help stabilize positioning of ribosome-bound tRNAs. This Deinococcus geothermalis (strain DSM 11300 / CIP 105573 / AG-3a) protein is Large ribosomal subunit protein uL5.